The following is a 593-amino-acid chain: Aspartate--tRNA(Asp/Asn) ligase (593 aa).

Glutamate 172 is an L-aspartate binding site. The aspartate stretch occupies residues 196 to 199; the sequence is QLFK. Residue arginine 218 coordinates L-aspartate. ATP is bound by residues 218 to 220 and glutamine 227; that span reads RDE. Histidine 450 lines the L-aspartate pocket. Residue glutamate 484 coordinates ATP. Arginine 491 lines the L-aspartate pocket. 536-539 is an ATP binding site; it reads GLDR.

Belongs to the class-II aminoacyl-tRNA synthetase family. Type 1 subfamily. Homodimer.

The protein resides in the cytoplasm. It catalyses the reaction tRNA(Asx) + L-aspartate + ATP = L-aspartyl-tRNA(Asx) + AMP + diphosphate. Functionally, aspartyl-tRNA synthetase with relaxed tRNA specificity since it is able to aspartylate not only its cognate tRNA(Asp) but also tRNA(Asn). Reaction proceeds in two steps: L-aspartate is first activated by ATP to form Asp-AMP and then transferred to the acceptor end of tRNA(Asp/Asn). The protein is Aspartate--tRNA(Asp/Asn) ligase of Nitrosomonas eutropha (strain DSM 101675 / C91 / Nm57).